A 434-amino-acid polypeptide reads, in one-letter code: Beta-enolase (434 aa).

Alanine 2 carries the post-translational modification N-acetylalanine. Threonine 72 is modified (phosphothreonine). Phosphoserine occurs at positions 83 and 157. The substrate site is built by histidine 158 and glutamate 167. Serine 176 is modified (phosphoserine). At threonine 205 the chain carries Phosphothreonine. Glutamate 210 acts as the Proton donor in catalysis. Threonine 229 carries the post-translational modification Phosphothreonine. Tyrosine 236 is modified (phosphotyrosine). Residue aspartate 245 coordinates Mg(2+). Serine 263 carries the phosphoserine modification. Residues glutamate 293 and aspartate 318 each contribute to the substrate site. The Mg(2+) site is built by glutamate 293 and aspartate 318. Lysine 343 (proton acceptor) is an active-site residue. Substrate is bound by residues 370–373 (SHRS) and lysine 394.

This sequence belongs to the enolase family. Mammalian enolase is composed of 3 isozyme subunits, alpha, beta and gamma, which can form homodimers or heterodimers which are cell-type and development-specific. Interacts with PNKD. It depends on Mg(2+) as a cofactor. As to expression, the alpha/alpha homodimer is expressed in embryo and in most adult tissues. The alpha/beta heterodimer and the beta/beta homodimer are found in striated muscle, and the alpha/gamma heterodimer and the gamma/gamma homodimer in neurons.

It localises to the cytoplasm. It catalyses the reaction (2R)-2-phosphoglycerate = phosphoenolpyruvate + H2O. The protein operates within carbohydrate degradation; glycolysis; pyruvate from D-glyceraldehyde 3-phosphate: step 4/5. Its function is as follows. Glycolytic enzyme that catalyzes the conversion of 2-phosphoglycerate to phosphoenolpyruvate. Appears to have a function in striated muscle development and regeneration. The sequence is that of Beta-enolase (ENO3) from Homo sapiens (Human).